The chain runs to 296 residues: Glycine--tRNA ligase alpha subunit (296 aa).

It belongs to the class-II aminoacyl-tRNA synthetase family. As to quaternary structure, tetramer of two alpha and two beta subunits.

Its subcellular location is the cytoplasm. It carries out the reaction tRNA(Gly) + glycine + ATP = glycyl-tRNA(Gly) + AMP + diphosphate. The polypeptide is Glycine--tRNA ligase alpha subunit (Francisella philomiragia subsp. philomiragia (strain ATCC 25017 / CCUG 19701 / FSC 153 / O#319-036)).